The sequence spans 285 residues: Bifunctional protein FolD (285 aa).

Residues 165 to 167 (GAS) and isoleucine 232 each bind NADP(+).

This sequence belongs to the tetrahydrofolate dehydrogenase/cyclohydrolase family. Homodimer.

The enzyme catalyses (6R)-5,10-methylene-5,6,7,8-tetrahydrofolate + NADP(+) = (6R)-5,10-methenyltetrahydrofolate + NADPH. The catalysed reaction is (6R)-5,10-methenyltetrahydrofolate + H2O = (6R)-10-formyltetrahydrofolate + H(+). The protein operates within one-carbon metabolism; tetrahydrofolate interconversion. Its function is as follows. Catalyzes the oxidation of 5,10-methylenetetrahydrofolate to 5,10-methenyltetrahydrofolate and then the hydrolysis of 5,10-methenyltetrahydrofolate to 10-formyltetrahydrofolate. The polypeptide is Bifunctional protein FolD (Sulfurihydrogenibium sp. (strain YO3AOP1)).